The following is a 191-amino-acid chain: Probable rho GDP-dissociation inhibitor (191 aa).

The tract at residues 1–22 (MSDHENTGENTSEYQYKQPPQK) is disordered. Residues 8-21 (GENTSEYQYKQPPQ) are compositionally biased toward polar residues.

This sequence belongs to the Rho GDI family.

The protein localises to the cytoplasm. Its function is as follows. Regulates the GDP/GTP exchange reaction of the Rho proteins by inhibiting the dissociation of GDP from them, and the subsequent binding of GTP to them. The sequence is that of Probable rho GDP-dissociation inhibitor (rhi-1) from Caenorhabditis elegans.